The chain runs to 248 residues: tRNA uridine(34) hydroxylase (248 aa).

The 95-residue stretch at 127 to 221 folds into the Rhodanese domain; it reads RGRPLVLLDT…YFEEVGGEGY (95 aa). Residue Cys181 is the Cysteine persulfide intermediate of the active site.

Belongs to the TrhO family.

The catalysed reaction is uridine(34) in tRNA + AH2 + O2 = 5-hydroxyuridine(34) in tRNA + A + H2O. Functionally, catalyzes oxygen-dependent 5-hydroxyuridine (ho5U) modification at position 34 in tRNAs. In Xanthomonas axonopodis pv. citri (strain 306), this protein is tRNA uridine(34) hydroxylase.